We begin with the raw amino-acid sequence, 322 residues long: Ferrochelatase (322 aa).

Fe cation-binding residues include histidine 193 and glutamate 274.

Belongs to the ferrochelatase family.

It localises to the cytoplasm. It carries out the reaction heme b + 2 H(+) = protoporphyrin IX + Fe(2+). Its pathway is porphyrin-containing compound metabolism; protoheme biosynthesis; protoheme from protoporphyrin-IX: step 1/1. Functionally, catalyzes the ferrous insertion into protoporphyrin IX. In Aliivibrio fischeri (strain MJ11) (Vibrio fischeri), this protein is Ferrochelatase.